A 675-amino-acid polypeptide reads, in one-letter code: E3 ubiquitin-protein ligase COP1 (675 aa).

The disordered stretch occupies residues 1 to 40 (MEEISTDPVVPAVKPDPRTSSVGEGANRHENDDGGSGGSE). Zn(2+)-binding residues include cysteine 52, cysteine 55, cysteine 67, histidine 69, cysteine 72, cysteine 75, cysteine 86, and cysteine 89. The RING-type zinc finger occupies 52–90 (CPICMQIIKDAFLTACGHSFCYMCIITHLRNKSDCPCCS). A CLS (cytoplasmic localization signal) region spans residues 67–177 (CGHSFCYMCI…LDFLHCLRKQ (111 aa)). Positions 120 to 177 (ASPLDQFREALQRGCDVSIKEVDNLLTLLAERKRKMEQEEAERNMQILLDFLHCLRKQ) are SNLS (subnuclear localization signal). The stretch at 134-201 (CDVSIKEVDN…IKEDINAVER (68 aa)) forms a coiled coil. The tract at residues 261–290 (EGKAQGSSHGLPKKDALSGSDSQSLNQSTV) is disordered. Polar residues predominate over residues 279-290 (GSDSQSLNQSTV). A Bipartite nuclear localization signal motif is present at residues 294–317 (RKKRIHAQFNDLQECYLQKRRQLA). WD repeat units lie at residues 369–408 (HSAN…NEPA), 418–458 (STRS…SLME), 461–501 (EHEK…SVIN), 503–543 (DMKA…QPLH), 547–585 (GHKK…PVRT), 588–627 (GHTN…PVTS), and 642–675 (AGSY…VLAA). The interval 593–595 (KNF) is binding of human TRIB1 COP1-binding-motif.

In terms of assembly, homodimer. Interacts with HY5, HYH, BBX24/STO, BBX25/STH, CIP8, COP10, SPA1, SPA2, SPA3, SPA4 and UVR8 and phosphorylated PHYA. Light induces dissociation of the SPA1/COP1 complex. Interacts with HRT/RPP8 and triggers it to the 26s proteasome. Binds to CRY2; this competitive interaction prevents triggering to proteasome of other binding proteins. Binds to SHW1 in the nucleus. Bonds to CIP7. Interacts with CSU2. Binds to CIP1. Interacts directly with DHU1. Associates to UNE10/PIF8. Binds directly to PCH1 and PCHL. In terms of processing, autoubiquitinated.

The protein resides in the nucleus. Its subcellular location is the cytoplasm. It catalyses the reaction S-ubiquitinyl-[E2 ubiquitin-conjugating enzyme]-L-cysteine + [acceptor protein]-L-lysine = [E2 ubiquitin-conjugating enzyme]-L-cysteine + N(6)-ubiquitinyl-[acceptor protein]-L-lysine.. It participates in protein modification; protein ubiquitination. E3 ubiquitin-protein ligase that acts as a repressor of photomorphogenesis and as an activator of etiolation in darkness. E3 ubiquitin ligases accept ubiquitin from an E2 ubiquitin-conjugating enzyme in the form of a thioester and then directly transfers the ubiquitin to targeted substrates. Represses photomorphogenesis in darkness by mediating ubiquitination and subsequent proteasomal degradation of light-induced transcription factors such as HY5, HYH and LAF1. Down-regulates MYB21, probably via ubiquitination process. Light stimuli abrogate the repression of photomorphogenesis, possibly due to its localization to the cytoplasm. Could play a role in switching between skotomorphogenetic and photomorphogenetic pathways. Mediates the ubiquitination-dependent degradation of HY5 in the darkness during seedling development (e.g. hypocotyl growth). Represses CIP7 in darkness. Triggers ubiquitination and subsequent protein degradation of UNE10/PIF8, PCH1 and PCHL in the dark. The polypeptide is E3 ubiquitin-protein ligase COP1 (Arabidopsis thaliana (Mouse-ear cress)).